Consider the following 41-residue polypeptide: uncharacterized protein (41 aa).

The first 23 residues, 1–23, serve as a signal peptide directing secretion; the sequence is MNFLMRAIFSLLLLFTLSIPVIS.

This is an uncharacterized protein from Escherichia coli (strain K12).